The sequence spans 498 residues: ATP synthase subunit beta, chloroplastic (498 aa).

172–179 (GGAGVGKT) is a binding site for ATP.

It belongs to the ATPase alpha/beta chains family. F-type ATPases have 2 components, CF(1) - the catalytic core - and CF(0) - the membrane proton channel. CF(1) has five subunits: alpha(3), beta(3), gamma(1), delta(1), epsilon(1). CF(0) has four main subunits: a(1), b(1), b'(1) and c(9-12).

The protein localises to the plastid. Its subcellular location is the chloroplast thylakoid membrane. It catalyses the reaction ATP + H2O + 4 H(+)(in) = ADP + phosphate + 5 H(+)(out). In terms of biological role, produces ATP from ADP in the presence of a proton gradient across the membrane. The catalytic sites are hosted primarily by the beta subunits. The sequence is that of ATP synthase subunit beta, chloroplastic from Chamaerops humilis (Mediterranean fan palm).